The chain runs to 247 residues: MSTSNRILLGVNIDHVATLRQARGTRYPDPVKAALDAEEAGADGITVHLREDRRHIQERDVLLLKDVLQTRMNFEMGVTEEMMAFAERIRPAHICLVPETRQELTTEGGLDVAGQEARIKAAVERLSKIGSEVSLFIDADERQIEASRRVGAPAIELHTGRYADATTPTEVADELQRIIDGVNCGLNEGLIVNAGHGLHYHNVEAVAAIKGINELNIGHALVAHALFVGFKGAVAEMKALILAAAKA.

Asn12 contributes to the 3-amino-2-oxopropyl phosphate binding site. 14–15 lines the 1-deoxy-D-xylulose 5-phosphate pocket; that stretch reads DH. Arg23 is a binding site for 3-amino-2-oxopropyl phosphate. The active-site Proton acceptor is the His48. 2 residues coordinate 1-deoxy-D-xylulose 5-phosphate: Arg50 and His55. Glu75 serves as the catalytic Proton acceptor. Thr105 is a 1-deoxy-D-xylulose 5-phosphate binding site. The active-site Proton donor is the His196. Residues Gly197 and 218–219 each bind 3-amino-2-oxopropyl phosphate; that span reads GH.

Belongs to the PNP synthase family. Homooctamer; tetramer of dimers.

The protein localises to the cytoplasm. It carries out the reaction 3-amino-2-oxopropyl phosphate + 1-deoxy-D-xylulose 5-phosphate = pyridoxine 5'-phosphate + phosphate + 2 H2O + H(+). Its pathway is cofactor biosynthesis; pyridoxine 5'-phosphate biosynthesis; pyridoxine 5'-phosphate from D-erythrose 4-phosphate: step 5/5. In terms of biological role, catalyzes the complicated ring closure reaction between the two acyclic compounds 1-deoxy-D-xylulose-5-phosphate (DXP) and 3-amino-2-oxopropyl phosphate (1-amino-acetone-3-phosphate or AAP) to form pyridoxine 5'-phosphate (PNP) and inorganic phosphate. The protein is Pyridoxine 5'-phosphate synthase of Pseudomonas fluorescens (strain SBW25).